A 322-amino-acid polypeptide reads, in one-letter code: Fructose-1,6-bisphosphatase class 1 1 (322 aa).

Positions 84, 103, 105, and 106 each coordinate Mg(2+). Substrate is bound by residues 106-109 (DGSS), Asn198, and Lys264. Position 270 (Glu270) interacts with Mg(2+).

This sequence belongs to the FBPase class 1 family. Homotetramer. Requires Mg(2+) as cofactor.

Its subcellular location is the cytoplasm. It carries out the reaction beta-D-fructose 1,6-bisphosphate + H2O = beta-D-fructose 6-phosphate + phosphate. It participates in carbohydrate biosynthesis; gluconeogenesis. This is Fructose-1,6-bisphosphatase class 1 1 from Pseudoalteromonas translucida (strain TAC 125).